Consider the following 773-residue polypeptide: Tyrosine kinase receptor Cad96Ca (773 aa).

The N-terminal stretch at 1-48 is a signal peptide; it reads MVYHHHNHESRIIHCRKQLTSWRRRSLLLTIIVVTATVVSLISQEAEA. Residues 49–315 are Extracellular-facing; sequence HNQNAPPILY…ITIFSLKSGT (267 aa). One can recognise a Cadherin domain in the interval 58–172; it reads YVRERNWRIS…ENSSGYRPQT (115 aa). N-linked (GlcNAc...) asparagine glycans are attached at residues N126, N164, and N180. Residues 196–302 are disordered; the sequence is SIRNGLPNSR…TPSGGHHNNS (107 aa). Over residues 209–235 the composition is skewed to pro residues; that stretch reads WYPPVPQNNIFGPPPFGNNYPPPPPNI. Positions 243-253 are enriched in acidic residues; it reads SGEEEQPDEEV. Polar residues-rich tracts occupy residues 254–283 and 290–302; these read TPTT…STRV and ETTT…HNNS. N-linked (GlcNAc...) asparagine glycans are attached at residues N278, N279, N300, and N301. The helical transmembrane segment at 316-336 threads the bilayer; it reads IPIVVTVGGFFVAIAVLLAYL. Residues 337-773 are Cytoplasmic-facing; the sequence is CRRRLCAISR…NIVSLSGEKL (437 aa). 2 disordered regions span residues 352–373 and 411–447; these read KEKE…LTDD and TGVT…AGSS. Over residues 361-373 the composition is skewed to polar residues; that stretch reads SNQSQLSSTLTDD. Positions 411–433 are enriched in low complexity; it reads TGVTNGGVSSPGVPSPGTGEPGS. The Protein kinase domain occupies 470–749; sequence LKFFNILGEG…MLDKLLHTEM (280 aa). Residues 476-484 and K504 each bind ATP; that span reads LGEGAFGQV. D610 functions as the Proton acceptor in the catalytic mechanism.

This sequence belongs to the protein kinase superfamily. Tyr protein kinase family. Fibroblast growth factor receptor subfamily.

Its subcellular location is the membrane. The catalysed reaction is L-tyrosyl-[protein] + ATP = O-phospho-L-tyrosyl-[protein] + ADP + H(+). In Drosophila melanogaster (Fruit fly), this protein is Tyrosine kinase receptor Cad96Ca (Cad96Ca).